Reading from the N-terminus, the 491-residue chain is Glutamyl-tRNA(Gln) amidotransferase subunit A (491 aa).

Catalysis depends on charge relay system residues Lys-79 and Ser-154. Catalysis depends on Ser-178, which acts as the Acyl-ester intermediate.

The protein belongs to the amidase family. GatA subfamily. In terms of assembly, heterotrimer of A, B and C subunits.

The catalysed reaction is L-glutamyl-tRNA(Gln) + L-glutamine + ATP + H2O = L-glutaminyl-tRNA(Gln) + L-glutamate + ADP + phosphate + H(+). Functionally, allows the formation of correctly charged Gln-tRNA(Gln) through the transamidation of misacylated Glu-tRNA(Gln) in organisms which lack glutaminyl-tRNA synthetase. The reaction takes place in the presence of glutamine and ATP through an activated gamma-phospho-Glu-tRNA(Gln). The protein is Glutamyl-tRNA(Gln) amidotransferase subunit A of Synechococcus sp. (strain CC9605).